Consider the following 77-residue polypeptide: Conotoxin PnMEKL-04 (77 aa).

Residues 1–19 (MEKLTILLLVAAVLMSTQA) form the signal peptide. Residues 20–45 (LPQGGGENRLKENIKFLLKRKTAADR) constitute a propeptide that is removed on maturation. Cystine bridges form between C51–C65, C58–C69, and C64–C73.

The protein belongs to the conotoxin O2 superfamily. In terms of tissue distribution, expressed by the venom duct.

The protein localises to the secreted. The protein is Conotoxin PnMEKL-04 of Conus pennaceus (Feathered cone).